A 334-amino-acid chain; its full sequence is Large ribosomal subunit protein uL3 (334 aa).

A compositionally biased stretch (basic residues) spans 1–10 (MGMKKNRPRR). The segment at 1-21 (MGMKKNRPRRGSLAFSPRKRA) is disordered.

It belongs to the universal ribosomal protein uL3 family. In terms of assembly, part of the 50S ribosomal subunit. Forms a cluster with proteins L14 and L24e.

Functionally, one of the primary rRNA binding proteins, it binds directly near the 3'-end of the 23S rRNA, where it nucleates assembly of the 50S subunit. This chain is Large ribosomal subunit protein uL3, found in Methanococcus maripaludis (strain DSM 14266 / JCM 13030 / NBRC 101832 / S2 / LL).